A 728-amino-acid polypeptide reads, in one-letter code: Catalase-peroxidase 1 (728 aa).

The segment at residues 91–218 is a cross-link (tryptophyl-tyrosyl-methioninium (Trp-Tyr) (with M-244)); the sequence is WHSAGTYRIA…LAAVQMGLIY (128 aa). Residue H92 is the Proton acceptor of the active site. A cross-link (tryptophyl-tyrosyl-methioninium (Tyr-Met) (with W-91)) is located at residues 218–244; it reads YVNPEGPDGNPDPVAAARDIRDTFARM. H259 provides a ligand contact to heme b.

The protein belongs to the peroxidase family. Peroxidase/catalase subfamily. In terms of assembly, homodimer or homotetramer. It depends on heme b as a cofactor. In terms of processing, formation of the three residue Trp-Tyr-Met cross-link is important for the catalase, but not the peroxidase activity of the enzyme.

It carries out the reaction H2O2 + AH2 = A + 2 H2O. The catalysed reaction is 2 H2O2 = O2 + 2 H2O. Its function is as follows. Bifunctional enzyme with both catalase and broad-spectrum peroxidase activity. The polypeptide is Catalase-peroxidase 1 (Burkholderia ambifaria (strain ATCC BAA-244 / DSM 16087 / CCUG 44356 / LMG 19182 / AMMD) (Burkholderia cepacia (strain AMMD))).